Here is a 545-residue protein sequence, read N- to C-terminus: Glucose-6-phosphate isomerase (545 aa).

The Proton donor role is filled by Glu351. Residues His382 and Lys510 contribute to the active site.

Belongs to the GPI family.

The protein localises to the cytoplasm. The enzyme catalyses alpha-D-glucose 6-phosphate = beta-D-fructose 6-phosphate. Its pathway is carbohydrate biosynthesis; gluconeogenesis. It participates in carbohydrate degradation; glycolysis; D-glyceraldehyde 3-phosphate and glycerone phosphate from D-glucose: step 2/4. Functionally, catalyzes the reversible isomerization of glucose-6-phosphate to fructose-6-phosphate. The protein is Glucose-6-phosphate isomerase of Shewanella baltica (strain OS195).